The chain runs to 302 residues: Ribose-5-phosphate isomerase (302 aa).

It belongs to the ribose 5-phosphate isomerase family.

The protein localises to the cytoplasm. The catalysed reaction is aldehydo-D-ribose 5-phosphate = D-ribulose 5-phosphate. It functions in the pathway carbohydrate degradation; pentose phosphate pathway; D-ribose 5-phosphate from D-ribulose 5-phosphate (non-oxidative stage): step 1/1. The sequence is that of Ribose-5-phosphate isomerase (RKI1) from Cryptococcus neoformans var. neoformans serotype D (strain B-3501A) (Filobasidiella neoformans).